Reading from the N-terminus, the 571-residue chain is Proline--tRNA ligase (571 aa).

It belongs to the class-II aminoacyl-tRNA synthetase family. ProS type 1 subfamily. Homodimer.

The protein localises to the cytoplasm. It carries out the reaction tRNA(Pro) + L-proline + ATP = L-prolyl-tRNA(Pro) + AMP + diphosphate. In terms of biological role, catalyzes the attachment of proline to tRNA(Pro) in a two-step reaction: proline is first activated by ATP to form Pro-AMP and then transferred to the acceptor end of tRNA(Pro). As ProRS can inadvertently accommodate and process non-cognate amino acids such as alanine and cysteine, to avoid such errors it has two additional distinct editing activities against alanine. One activity is designated as 'pretransfer' editing and involves the tRNA(Pro)-independent hydrolysis of activated Ala-AMP. The other activity is designated 'posttransfer' editing and involves deacylation of mischarged Ala-tRNA(Pro). The misacylated Cys-tRNA(Pro) is not edited by ProRS. In Ectopseudomonas mendocina (strain ymp) (Pseudomonas mendocina), this protein is Proline--tRNA ligase.